We begin with the raw amino-acid sequence, 608 residues long: Protein UL27 (608 aa).

Positions 1 to 13 (MNPVDQPPPPLPT) are enriched in pro residues. A disordered region spans residues 1–33 (MNPVDQPPPPLPTQQPEEQAKEDHDDGDERLFR). Positions 18–33 (EQAKEDHDDGDERLFR) are enriched in basic and acidic residues.

It belongs to the herpesviridae U4 family. Interacts with host KAT5, PSME3 and EP400.

It is found in the host nucleus. The protein resides in the host nucleolus. Functionally, promotes a cell cycle arrest in G0/G1 by inducing the proteasomal degradation of host histone acetyltransferase KAT5/Tip60. This Human cytomegalovirus (strain AD169) (HHV-5) protein is Protein UL27 (UL27).